The sequence spans 247 residues: NH(3)-dependent NAD(+) synthetase (247 aa).

ATP is bound at residue 29–36 (GISGGIDS). A Mg(2+)-binding site is contributed by D35. Deamido-NAD(+) is bound at residue R120. An ATP-binding site is contributed by T140. A Mg(2+)-binding site is contributed by E145. Residues K153 and D160 each coordinate deamido-NAD(+). Residues K169 and S191 each coordinate ATP. A deamido-NAD(+)-binding site is contributed by 237 to 238 (HK).

This sequence belongs to the NAD synthetase family. In terms of assembly, homodimer.

The enzyme catalyses deamido-NAD(+) + NH4(+) + ATP = AMP + diphosphate + NAD(+) + H(+). Its pathway is cofactor biosynthesis; NAD(+) biosynthesis; NAD(+) from deamido-NAD(+) (ammonia route): step 1/1. Functionally, catalyzes the ATP-dependent amidation of deamido-NAD to form NAD. Uses ammonia as a nitrogen source. This is NH(3)-dependent NAD(+) synthetase from Alkaliphilus metalliredigens (strain QYMF).